We begin with the raw amino-acid sequence, 282 residues long: Acetyl-coenzyme A carboxylase carboxyl transferase subunit beta (282 aa).

Positions 25-282 (VWRKCPHCNE…SQMLRIFMKQ (258 aa)) constitute a CoA carboxyltransferase N-terminal domain. C29, C32, C48, and C51 together coordinate Zn(2+). Residues 29-51 (CPHCNEIIYAKEIERNLNVCPKC) form a C4-type zinc finger.

The protein belongs to the AccD/PCCB family. In terms of assembly, acetyl-CoA carboxylase is a heterohexamer composed of biotin carboxyl carrier protein (AccB), biotin carboxylase (AccC) and two subunits each of ACCase subunit alpha (AccA) and ACCase subunit beta (AccD). Zn(2+) serves as cofactor.

The protein resides in the cytoplasm. The enzyme catalyses N(6)-carboxybiotinyl-L-lysyl-[protein] + acetyl-CoA = N(6)-biotinyl-L-lysyl-[protein] + malonyl-CoA. Its pathway is lipid metabolism; malonyl-CoA biosynthesis; malonyl-CoA from acetyl-CoA: step 1/1. Its function is as follows. Component of the acetyl coenzyme A carboxylase (ACC) complex. Biotin carboxylase (BC) catalyzes the carboxylation of biotin on its carrier protein (BCCP) and then the CO(2) group is transferred by the transcarboxylase to acetyl-CoA to form malonyl-CoA. This chain is Acetyl-coenzyme A carboxylase carboxyl transferase subunit beta, found in Syntrophotalea carbinolica (strain DSM 2380 / NBRC 103641 / GraBd1) (Pelobacter carbinolicus).